A 314-amino-acid chain; its full sequence is uncharacterized protein (314 aa).

Positions 1-18 are cleaved as a signal peptide; the sequence is MKVSLLIFLIILVGVIKS. Residues N43, N96, N109, N116, N117, and N161 are each glycosylated (N-linked (GlcNAc...) asparagine). A disordered region spans residues 252–314; sequence SMRITKNNPH…PKSIDFHHLF (63 aa). 2 stretches are compositionally biased toward low complexity: residues 257-268 and 285-296; these read KNNPHLNNNNNN and KTTTKTSTKTTS.

The protein resides in the secreted. This is an uncharacterized protein from Dictyostelium discoideum (Social amoeba).